Reading from the N-terminus, the 145-residue chain is Secreted LysM effector Vd2LysM (145 aa).

A signal peptide spans 1–18; that stretch reads MRPDVFVLFTAFLGPAAA. LysM domains follow at residues 31-75 and 96-140; these read GWYI…KIKV and GWYH…DIVV.

Belongs to the secreted LysM effector family. As to quaternary structure, forms homodimers in a chitin-independent manner through interactions at the N-termini of EPL2 monomers. Homodimers are further polymerized in a chitin-dependent manner.

Its function is as follows. Secreted effector that enables the plant pathogenic fungus to manipulate host defenses for successful infection. Binds chitin, suppresses chitin-induced immune responses and protects hyphae against degradation by plant hydrolytic enzymes. Chitin-induced polymerization of homodimers forms a contiguous ELP2 highly oligomeric super-complexe that may precipitate at infection sites to eliminate chitin oligomers, and thus suppress the activation of chitin-induced plant immunity. This chain is Secreted LysM effector Vd2LysM, found in Verticillium dahliae (strain VdLs.17 / ATCC MYA-4575 / FGSC 10137) (Verticillium wilt).